Consider the following 555-residue polypeptide: Glutamine--tRNA ligase (555 aa).

The 'HIGH' region motif lies at 34 to 44; it reads PEPNGYLHIGH. Residues 35 to 37 and 41 to 47 contribute to the ATP site; these read EPN and HIGHAKS. L-glutamine is bound by residues Asp67 and Tyr212. ATP is bound by residues Thr231, 261–262, and 269–271; these read RL and MSK. A 'KMSKS' region motif is present at residues 268 to 272; the sequence is IMSKR.

This sequence belongs to the class-I aminoacyl-tRNA synthetase family. As to quaternary structure, monomer.

It localises to the cytoplasm. The enzyme catalyses tRNA(Gln) + L-glutamine + ATP = L-glutaminyl-tRNA(Gln) + AMP + diphosphate. In Yersinia enterocolitica serotype O:8 / biotype 1B (strain NCTC 13174 / 8081), this protein is Glutamine--tRNA ligase.